Here is a 128-residue protein sequence, read N- to C-terminus: RutC family protein BUsg_359 (128 aa).

Belongs to the RutC family.

This chain is RutC family protein BUsg_359, found in Buchnera aphidicola subsp. Schizaphis graminum (strain Sg).